The chain runs to 755 residues: MGSFLRSLRRDVGPPTPSVGATPAKKEPPVPPVTPLEKMLQDMGAIREDGSDKFFGMENYGNTCYCNSILQCLYYSVPFREAVVNYPTRTPIESLEAALANTLRYQNFAANLEAEALAEKQKAANAQRPGAPPNQPQKPEDKDSPEYKKKMALQTLPLLETKNNATSYGMSESLFTSLKDLFESVVASQSRIGIIRPQHFLDVLRREHEMFRTAMHQDAHEFLNLLLNEVVANVEAEASKQPEPERSLPPAESADSTELSGSSGSKTPNTTRWVHELFEGTLTSETQCLTCEKVSQRDEVFLDLSVDLEQHSSVTSCLRKFSAEEMLCERNKFHCDNCGGLQEAEKRMKIKRLPRILALHLKRFKYTEDLQRLQKLFHRVVYPYHLRLFNTTDDAEDPDRLYELYAVVVHIGGGPYHGHYVAIIKTQDRGWLLFDDEMVEPVDKNYVRNFFGDRPGLACAYVLFYQETTLEAVMKEQEQENMDLNTSVADINDSTLKQNGYPLSPGLAHVHSASQIPSPSEPARFSNLQRAPTAPPLFPHPEHADSESSPADPSTTASATPPVPPIPDIHSLPLSPKKSDSHFKKERAKEEKERKANEKEKEKQRRRDQEARIREQRREDAEIRAALEASKASKAEEDRRHSPDDTKKSSHGLSRLKRGSKSFSHRLGKDKENRVSSSSHSATPIAEHPPSRNGASESQQQLPNGQSPGSHGLHTRHTGLDEERDTLKDPKHDRSGHHGKWRSFSLKKKSFSILS.

Residues 1–32 (MGSFLRSLRRDVGPPTPSVGATPAKKEPPVPP) form a disordered region. One can recognise a USP domain in the interval 55–468 (FGMENYGNTC…CAYVLFYQET (414 aa)). Cys-64 functions as the Nucleophile in the catalytic mechanism. Disordered regions lie at residues 119 to 146 (EKQK…DSPE) and 237 to 270 (EASK…TPNT). The segment covering 237–246 (EASKQPEPER) has biased composition (basic and acidic residues). Residues 254–270 (ADSTELSGSSGSKTPNT) show a composition bias toward polar residues. Residue His-419 is the Proton acceptor of the active site. The disordered stretch occupies residues 495 to 755 (TLKQNGYPLS…LKKKSFSILS (261 aa)). The span at 547-560 (ESSPADPSTTASAT) shows a compositional bias: low complexity. Positions 577–648 (KKSDSHFKKE…RRHSPDDTKK (72 aa)) are enriched in basic and acidic residues. The stretch at 581–630 (SHFKKERAKEEKERKANEKEKEKQRRRDQEARIREQRREDAEIRAALEAS) forms a coiled coil. Residues 654–666 (SRLKRGSKSFSHR) are compositionally biased toward basic residues. The span at 693–709 (NGASESQQQLPNGQSPG) shows a compositional bias: polar residues. The segment covering 718 to 733 (TGLDEERDTLKDPKHD) has biased composition (basic and acidic residues). Basic residues predominate over residues 734–755 (RSGHHGKWRSFSLKKKSFSILS).

The protein belongs to the peptidase C19 family. Interacts with creA, creC and qutD.

The enzyme catalyses Thiol-dependent hydrolysis of ester, thioester, amide, peptide and isopeptide bonds formed by the C-terminal Gly of ubiquitin (a 76-residue protein attached to proteins as an intracellular targeting signal).. In terms of biological role, ubiquitin thioesterase component of the regulatory network controlling carbon source utilization through ubiquitination and deubiquitination involving creA, creB, creC, creD and acrB. Deubiquitinates the creA catabolic repressor and the quinate permease qutD. Also plays a role in response to carbon starvation and the control of extracellular proteases activity. The polypeptide is Probable ubiquitin carboxyl-terminal hydrolase creB (creB) (Aspergillus flavus (strain ATCC 200026 / FGSC A1120 / IAM 13836 / NRRL 3357 / JCM 12722 / SRRC 167)).